Here is a 214-residue protein sequence, read N- to C-terminus: Large ribosomal subunit protein uL3 (214 aa).

The tract at residues 131 to 155 (GAQRTSHGNSRSHRVPGSIGMAQDP) is disordered. Residue glutamine 153 is modified to N5-methylglutamine.

This sequence belongs to the universal ribosomal protein uL3 family. As to quaternary structure, part of the 50S ribosomal subunit. Forms a cluster with proteins L14 and L19. Post-translationally, methylated by PrmB.

Its function is as follows. One of the primary rRNA binding proteins, it binds directly near the 3'-end of the 23S rRNA, where it nucleates assembly of the 50S subunit. The protein is Large ribosomal subunit protein uL3 of Neisseria gonorrhoeae (strain ATCC 700825 / FA 1090).